The primary structure comprises 261 residues: Cytochrome c oxidase subunit 3 (261 aa).

Residues 1–15 are Mitochondrial matrix-facing; sequence MTHQTHAYHMVNPSP. Residues 16–34 form a helical membrane-spanning segment; it reads WPLTGALSALLMTSGLIMW. Topologically, residues 35-40 are mitochondrial intermembrane; that stretch reads FHFNST. A helical transmembrane segment spans residues 41–66; sequence ALLMLGLTTNMLTMYQWWRDIIREST. The Mitochondrial matrix portion of the chain corresponds to 67–72; that stretch reads FQGHHT. A helical membrane pass occupies residues 73 to 105; sequence PVVQKGLRYGMILFIISEVLFFTGFFWAFYHSS. At 106 to 128 the chain is on the mitochondrial intermembrane side; it reads LAPTPELGGCWPPTGINPLNPLE. The helical transmembrane segment at 129 to 152 threads the bilayer; the sequence is VPLLNTSVLLASGVSITWAHHSLM. Topologically, residues 153 to 155 are mitochondrial matrix; it reads EGN. The helical transmembrane segment at 156 to 183 threads the bilayer; sequence RSHMLQALFITITLGVYFTLLQASEYYE. The Mitochondrial intermembrane portion of the chain corresponds to 184 to 190; sequence APFTISD. A helical transmembrane segment spans residues 191–223; it reads GVYGSTFFVATGFHGLHVIIGSTFLIVCFFRQL. The Mitochondrial matrix segment spans residues 224 to 232; that stretch reads KFHFTSNHH. The helical transmembrane segment at 233–256 threads the bilayer; it reads FGFEAAAWYWHFVDVVWLFLYVSI. Residues 257–261 are Mitochondrial intermembrane-facing; it reads YWWGS.

Belongs to the cytochrome c oxidase subunit 3 family. In terms of assembly, component of the cytochrome c oxidase (complex IV, CIV), a multisubunit enzyme composed of 14 subunits. The complex is composed of a catalytic core of 3 subunits MT-CO1, MT-CO2 and MT-CO3, encoded in the mitochondrial DNA, and 11 supernumerary subunits COX4I, COX5A, COX5B, COX6A, COX6B, COX6C, COX7A, COX7B, COX7C, COX8 and NDUFA4, which are encoded in the nuclear genome. The complex exists as a monomer or a dimer and forms supercomplexes (SCs) in the inner mitochondrial membrane with NADH-ubiquinone oxidoreductase (complex I, CI) and ubiquinol-cytochrome c oxidoreductase (cytochrome b-c1 complex, complex III, CIII), resulting in different assemblies (supercomplex SCI(1)III(2)IV(1) and megacomplex MCI(2)III(2)IV(2)).

It localises to the mitochondrion inner membrane. It carries out the reaction 4 Fe(II)-[cytochrome c] + O2 + 8 H(+)(in) = 4 Fe(III)-[cytochrome c] + 2 H2O + 4 H(+)(out). In terms of biological role, component of the cytochrome c oxidase, the last enzyme in the mitochondrial electron transport chain which drives oxidative phosphorylation. The respiratory chain contains 3 multisubunit complexes succinate dehydrogenase (complex II, CII), ubiquinol-cytochrome c oxidoreductase (cytochrome b-c1 complex, complex III, CIII) and cytochrome c oxidase (complex IV, CIV), that cooperate to transfer electrons derived from NADH and succinate to molecular oxygen, creating an electrochemical gradient over the inner membrane that drives transmembrane transport and the ATP synthase. Cytochrome c oxidase is the component of the respiratory chain that catalyzes the reduction of oxygen to water. Electrons originating from reduced cytochrome c in the intermembrane space (IMS) are transferred via the dinuclear copper A center (CU(A)) of subunit 2 and heme A of subunit 1 to the active site in subunit 1, a binuclear center (BNC) formed by heme A3 and copper B (CU(B)). The BNC reduces molecular oxygen to 2 water molecules using 4 electrons from cytochrome c in the IMS and 4 protons from the mitochondrial matrix. In Syncerus caffer (African buffalo), this protein is Cytochrome c oxidase subunit 3 (MT-CO3).